The sequence spans 518 residues: Putative beta-xylosidase (518 aa).

Asp-47 (proton acceptor) is an active-site residue. The active-site Proton donor is Glu-203.

This sequence belongs to the glycosyl hydrolase 43 family.

The enzyme catalyses Hydrolysis of (1-&gt;4)-beta-D-xylans, to remove successive D-xylose residues from the non-reducing termini.. This Xylanibacter ruminicola (Prevotella ruminicola) protein is Putative beta-xylosidase.